Here is a 178-residue protein sequence, read N- to C-terminus: Interleukin-10 (178 aa).

The first 18 residues, 1–18, serve as a signal peptide directing secretion; it reads MHSSALLCCLVLLTGVRA. Cystine bridges form between Cys-30–Cys-126 and Cys-80–Cys-132. The N-linked (GlcNAc...) asparagine glycan is linked to Asn-134.

The protein belongs to the IL-10 family. In terms of assembly, homodimer. Interacts with IL10RA and IL10RB.

The protein localises to the secreted. Functionally, major immune regulatory cytokine that acts on many cells of the immune system where it has profound anti-inflammatory functions, limiting excessive tissue disruption caused by inflammation. Mechanistically, IL10 binds to its heterotetrameric receptor comprising IL10RA and IL10RB leading to JAK1 and STAT2-mediated phosphorylation of STAT3. In turn, STAT3 translocates to the nucleus where it drives expression of anti-inflammatory mediators. Targets antigen-presenting cells (APCs) such as macrophages and monocytes and inhibits their release of pro-inflammatory cytokines including granulocyte-macrophage colony-stimulating factor /GM-CSF, granulocyte colony-stimulating factor/G-CSF, IL-1 alpha, IL-1 beta, IL-6, IL-8 and TNF-alpha. Also interferes with antigen presentation by reducing the expression of MHC-class II and co-stimulatory molecules, thereby inhibiting their ability to induce T cell activation. In addition, controls the inflammatory response of macrophages by reprogramming essential metabolic pathways including mTOR signaling. This chain is Interleukin-10 (IL10), found in Pan troglodytes (Chimpanzee).